The following is a 225-amino-acid chain: Ribosomal RNA large subunit methyltransferase E (225 aa).

S-adenosyl-L-methionine-binding residues include Gly79, Trp81, Asp97, Asp113, and Asp137. The active-site Proton acceptor is the Lys177.

The protein belongs to the class I-like SAM-binding methyltransferase superfamily. RNA methyltransferase RlmE family.

Its subcellular location is the cytoplasm. The catalysed reaction is uridine(2552) in 23S rRNA + S-adenosyl-L-methionine = 2'-O-methyluridine(2552) in 23S rRNA + S-adenosyl-L-homocysteine + H(+). Its function is as follows. Specifically methylates the uridine in position 2552 of 23S rRNA at the 2'-O position of the ribose in the fully assembled 50S ribosomal subunit. In Acidiphilium cryptum (strain JF-5), this protein is Ribosomal RNA large subunit methyltransferase E.